Reading from the N-terminus, the 256-residue chain is ATP synthase peripheral stalk subunit b, mitochondrial (256 aa).

The transit peptide at methionine 1–valine 42 directs the protein to the mitochondrion. Residue lysine 131 is modified to N6-succinyllysine. Lysine 139, lysine 154, lysine 162, lysine 221, lysine 233, and lysine 244 each carry N6-acetyllysine.

The protein belongs to the eukaryotic ATPase B chain family. In terms of assembly, component of the ATP synthase complex composed at least of ATP5F1A/subunit alpha, ATP5F1B/subunit beta, ATP5MC1/subunit c (homooctomer), MT-ATP6/subunit a, MT-ATP8/subunit 8, ATP5ME/subunit e, ATP5MF/subunit f, ATP5MG/subunit g, ATP5MK/subunit k, ATP5MJ/subunit j, ATP5F1C/subunit gamma, ATP5F1D/subunit delta, ATP5F1E/subunit epsilon, ATP5PF/subunit F6, ATP5PB/subunit b, ATP5PD/subunit d, ATP5PO/subunit OSCP. ATP synthase complex consists of a soluble F(1) head domain (subunits alpha(3) and beta(3)) - the catalytic core - and a membrane F(0) domain - the membrane proton channel (subunits c, a, 8, e, f, g, k and j). These two domains are linked by a central stalk (subunits gamma, delta, and epsilon) rotating inside the F1 region and a stationary peripheral stalk (subunits F6, b, d, and OSCP).

It localises to the mitochondrion. It is found in the mitochondrion inner membrane. Subunit b, of the mitochondrial membrane ATP synthase complex (F(1)F(0) ATP synthase or Complex V) that produces ATP from ADP in the presence of a proton gradient across the membrane which is generated by electron transport complexes of the respiratory chain. ATP synthase complex consist of a soluble F(1) head domain - the catalytic core - and a membrane F(1) domain - the membrane proton channel. These two domains are linked by a central stalk rotating inside the F(1) region and a stationary peripheral stalk. During catalysis, ATP synthesis in the catalytic domain of F(1) is coupled via a rotary mechanism of the central stalk subunits to proton translocation. In vivo, can only synthesize ATP although its ATP hydrolase activity can be activated artificially in vitro. Part of the complex F(0) domain. Part of the complex F(0) domain and the peripheric stalk, which acts as a stator to hold the catalytic alpha(3)beta(3) subcomplex and subunit a/ATP6 static relative to the rotary elements. The protein is ATP synthase peripheral stalk subunit b, mitochondrial of Homo sapiens (Human).